A 483-amino-acid chain; its full sequence is Proline--tRNA ligase (483 aa).

Belongs to the class-II aminoacyl-tRNA synthetase family. ProS type 3 subfamily. Homodimer.

Its subcellular location is the cytoplasm. It catalyses the reaction tRNA(Pro) + L-proline + ATP = L-prolyl-tRNA(Pro) + AMP + diphosphate. Functionally, catalyzes the attachment of proline to tRNA(Pro) in a two-step reaction: proline is first activated by ATP to form Pro-AMP and then transferred to the acceptor end of tRNA(Pro). This chain is Proline--tRNA ligase, found in Mycoplasma pneumoniae (strain ATCC 29342 / M129 / Subtype 1) (Mycoplasmoides pneumoniae).